Here is a 408-residue protein sequence, read N- to C-terminus: Imidazolonepropionase (408 aa).

Fe(3+) contacts are provided by H73 and H75. Residues H73 and H75 each contribute to the Zn(2+) site. Residues R82, Y145, and H178 each contribute to the 4-imidazolone-5-propanoate site. Residue Y145 participates in N-formimidoyl-L-glutamate binding. H243 lines the Fe(3+) pocket. Residue H243 coordinates Zn(2+). 4-imidazolone-5-propanoate is bound at residue Q246. D318 lines the Fe(3+) pocket. Position 318 (D318) interacts with Zn(2+). N-formimidoyl-L-glutamate-binding residues include N320 and G322. S323 serves as a coordination point for 4-imidazolone-5-propanoate.

Belongs to the metallo-dependent hydrolases superfamily. HutI family. Zn(2+) is required as a cofactor. It depends on Fe(3+) as a cofactor.

Its subcellular location is the cytoplasm. The catalysed reaction is 4-imidazolone-5-propanoate + H2O = N-formimidoyl-L-glutamate. It functions in the pathway amino-acid degradation; L-histidine degradation into L-glutamate; N-formimidoyl-L-glutamate from L-histidine: step 3/3. Functionally, catalyzes the hydrolytic cleavage of the carbon-nitrogen bond in imidazolone-5-propanoate to yield N-formimidoyl-L-glutamate. It is the third step in the universal histidine degradation pathway. In Shewanella baltica (strain OS195), this protein is Imidazolonepropionase.